The primary structure comprises 280 residues: Shikimate dehydrogenase (NADP(+)) (280 aa).

Residues 23–25 (SLS) and T70 contribute to the shikimate site. K74 (proton acceptor) is an active-site residue. 2 residues coordinate shikimate: N95 and D111. NADP(+) contacts are provided by residues 135-139 (GSGGA), 158-163 (NRTISK), and I221. Y223 contributes to the shikimate binding site. G247 is an NADP(+) binding site.

Belongs to the shikimate dehydrogenase family. Homodimer.

It carries out the reaction shikimate + NADP(+) = 3-dehydroshikimate + NADPH + H(+). It functions in the pathway metabolic intermediate biosynthesis; chorismate biosynthesis; chorismate from D-erythrose 4-phosphate and phosphoenolpyruvate: step 4/7. Its function is as follows. Involved in the biosynthesis of the chorismate, which leads to the biosynthesis of aromatic amino acids. Catalyzes the reversible NADPH linked reduction of 3-dehydroshikimate (DHSA) to yield shikimate (SA). This is Shikimate dehydrogenase (NADP(+)) from Buchnera aphidicola subsp. Cinara cedri (strain Cc).